We begin with the raw amino-acid sequence, 142 residues long: Small ribosomal subunit protein uS12y (142 aa).

Residue P61 is modified to Hydroxyproline.

The protein belongs to the universal ribosomal protein uS12 family.

The chain is Small ribosomal subunit protein uS12y (RPS23B) from Arabidopsis thaliana (Mouse-ear cress).